The chain runs to 471 residues: Proline and serine-rich protein 2 (471 aa).

Disordered stretches follow at residues 1-46 and 82-247; these read MPGN…SFTM and CDSG…GDHV. Over residues 26–43 the composition is skewed to low complexity; the sequence is LSRGGSLESRCSSSRSRS. Ser43 carries the phosphoserine modification. Residue Thr45 is modified to Phosphothreonine. The segment covering 90-101 has biased composition (low complexity); that stretch reads SPQSLEESPSSH. Positions 154-177 are enriched in pro residues; that stretch reads LPPPDSRGPEVFPLPPSLPVPAPS. Phosphoserine occurs at positions 187, 220, and 223. Residue Arg263 is modified to Asymmetric dimethylarginine; alternate. Arg263 is modified (omega-N-methylarginine; alternate). 2 disordered regions span residues 310-365 and 383-437; these read DTSS…TEQP and PSSF…RAVG. Residues 313–324 are compositionally biased toward basic and acidic residues; sequence SEERWQKAEEQR. Composition is skewed to polar residues over residues 354-364 and 383-393; these read AQQSRAVQTEQ and PSSFVPTSKTI. Residues 415–427 are compositionally biased toward basic and acidic residues; sequence YEPRPDGSQDARK. Ser431 carries the post-translational modification Phosphoserine. Omega-N-methylarginine is present on Arg450.

The protein is Proline and serine-rich protein 2 (Proser2) of Mus musculus (Mouse).